Here is a 200-residue protein sequence, read N- to C-terminus: Putative 3-methyladenine DNA glycosylase (200 aa).

This sequence belongs to the DNA glycosylase MPG family.

This Bradyrhizobium diazoefficiens (strain JCM 10833 / BCRC 13528 / IAM 13628 / NBRC 14792 / USDA 110) protein is Putative 3-methyladenine DNA glycosylase.